The chain runs to 333 residues: Thiamine-monophosphate kinase (333 aa).

Residues aspartate 44, serine 58, threonine 59, and aspartate 60 each contribute to the Mg(2+) site. Histidine 67 lines the substrate pocket. Mg(2+) is bound by residues aspartate 89 and aspartate 137. ATP contacts are provided by residues glycine 136–aspartate 137 and arginine 162. Aspartate 224 lines the Mg(2+) pocket. Serine 226 contributes to the ATP binding site. Residue aspartate 227 coordinates Mg(2+). Substrate is bound by residues glutamate 278 and tryptophan 320.

Belongs to the thiamine-monophosphate kinase family.

It carries out the reaction thiamine phosphate + ATP = thiamine diphosphate + ADP. Its pathway is cofactor biosynthesis; thiamine diphosphate biosynthesis; thiamine diphosphate from thiamine phosphate: step 1/1. Catalyzes the ATP-dependent phosphorylation of thiamine-monophosphate (TMP) to form thiamine-pyrophosphate (TPP), the active form of vitamin B1. In Mycobacterium tuberculosis (strain CDC 1551 / Oshkosh), this protein is Thiamine-monophosphate kinase.